We begin with the raw amino-acid sequence, 253 residues long: MICOS complex subunit mic25 (253 aa).

Positions 1-89 (MGGSESTGRK…GAHKPTAAGV (89 aa)) are disordered. Gly2 carries N-myristoyl glycine lipidation. Residues 28-44 (RLSDEVVNRMKDSDLPS) show a composition bias toward basic and acidic residues. The segment covering 48 to 64 (STSAASGTASAPAAFPS) has biased composition (low complexity). The stretch at 94-178 (AEEDLYRRYE…EQLSSIEKKN (85 aa)) forms a coiled coil. The 43-residue stretch at 206 to 248 (DPVCMNLQADILKCYSENKQERLNCSNLAKEYRKCVSAAQKNL) folds into the CHCH domain. 2 short sequence motifs (cx9C motif) span residues 209–219 (CMNLQADILKC) and 230–240 (CSNLAKEYRKC). Intrachain disulfides connect Cys209–Cys240 and Cys219–Cys230.

It belongs to the MICOS complex subunit Mic19 family. Metazoan Mic25 subfamily. As to quaternary structure, component of the mitochondrial contact site and cristae organizing system (MICOS) complex (also known as MINOS or MitOS complex).

The protein localises to the mitochondrion inner membrane. Functionally, component of the MICOS complex, a large protein complex of the mitochondrial inner membrane that plays crucial roles in the maintenance of crista junctions, inner membrane architecture, and formation of contact sites to the outer membrane. The chain is MICOS complex subunit mic25 (chchd6) from Xenopus tropicalis (Western clawed frog).